The chain runs to 657 residues: MTQLTAGKPAPLGASFDGKGVNFTLFSAHAERVELCVFDREGNEYRYDLPAREGDIWHGYLEDGKPGLRYGFRVHGPWQPEYGLRFNPAKLLIDPCALRVDGDVKDDPLFLDGEQQPDPRDSAAIAPRSVVVSDVYDWEGDSSPDIPWGNTVIYEAHVKGLTYLHPAIPKEIRGTYKALGHPVMIAYLKHLGITSLELLPIWHFASEPRLQRLGLTNYWGYNPLAMFALDPRYASHPERARDEFRDAVKALHQAGIEVILDVVLNHSAELDLDGPTLSLRGIDNRSYYWIREDGDYHNWTGCGNTLNLSHPAVAEYAHACLKYWVETFHIDGFRFDLASVMGRTPAFSQQAPLLEAIKNCPVLSRVKLIAEPWDIGEGGYQVGNFPPPFAEWNDHYRDATRRFWLEKSLSLGEFAGRFSASSDVFKRQGRKPFSTVNLVTAHDGFTLRDCVCFNQKHNEANGEENRDGTNNNHSFNHGIEGLGGSQDVIERRRASVHALLTTLLLSQGTPMLLAGDEHGHSQHGNNNAYCQDNPLTWLDWEQANSGLTHFTAALIQLRQRIPALTADTWWEEGDGNVRWLNKDAQPLSAQEWQNGMPCLQILLSDNWLITFNATQDVVEIVLPDGEWRAIPPFAGEDNPVVVAVWHGPAHGVCVFQR.

The active-site Nucleophile is Asp-336. Catalysis depends on Glu-371, which acts as the Proton donor. The interval 460 to 479 (ANGEENRDGTNNNHSFNHGI) is disordered.

It belongs to the glycosyl hydrolase 13 family.

The catalysed reaction is Hydrolysis of (1-&gt;6)-alpha-D-glucosidic linkages to branches with degrees of polymerization of three or four glucose residues in limit dextrin.. It functions in the pathway glycan degradation; glycogen degradation. Removes maltotriose and maltotetraose chains that are attached by 1,6-alpha-linkage to the limit dextrin main chain, generating a debranched limit dextrin. This is Glycogen debranching enzyme from Enterobacter sp. (strain 638).